The sequence spans 240 residues: Molybdate/tungstate import ATP-binding protein WtpC (240 aa).

The ABC transporter domain maps to 2–227 (FLKVRAEKRL…KNGEVAEFLS (226 aa)). 31-38 (GPTGAGKS) serves as a coordination point for ATP.

It belongs to the ABC transporter superfamily. Sulfate/tungstate importer (TC 3.A.1.6) family. In terms of assembly, the complex is composed of two ATP-binding proteins (WtpC), two transmembrane proteins (WtpB) and a solute-binding protein (WtpA).

It is found in the cell membrane. It catalyses the reaction tungstate(in) + ATP + H2O = tungstate(out) + ADP + phosphate + H(+). Functionally, part of the ABC transporter complex WtpABC involved in molybdate/tungstate import. Responsible for energy coupling to the transport system. This chain is Molybdate/tungstate import ATP-binding protein WtpC (wtpC), found in Archaeoglobus fulgidus (strain ATCC 49558 / DSM 4304 / JCM 9628 / NBRC 100126 / VC-16).